A 689-amino-acid polypeptide reads, in one-letter code: Glycine--tRNA ligase beta subunit (689 aa).

It belongs to the class-II aminoacyl-tRNA synthetase family. In terms of assembly, tetramer of two alpha and two beta subunits.

The protein resides in the cytoplasm. It catalyses the reaction tRNA(Gly) + glycine + ATP = glycyl-tRNA(Gly) + AMP + diphosphate. The protein is Glycine--tRNA ligase beta subunit of Dictyoglomus thermophilum (strain ATCC 35947 / DSM 3960 / H-6-12).